Here is a 321-residue protein sequence, read N- to C-terminus: Fe-S cluster assembly protein DRE2 (321 aa).

Residues 1–161 (MPAPVPPTAF…STPVTLSGAR (161 aa)) are N-terminal SAM-like domain. Positions 123–168 (PSPSTLAYTSPSAPSLPTVASDPSPAPSSSTPVTLSGARPLQLRRN) are disordered. Over residues 139–156 (PTVASDPSPAPSSSTPVT) the composition is skewed to low complexity. The segment at 162-197 (PLQLRRNGDKARKAALWAIDSPLIPDGGKSLLTPAD) is linker. C203, C219, C222, and C224 together coordinate [2Fe-2S] cluster. The fe-S binding site A stretch occupies residues 203–224 (CVFPAENGKPVKRRRACKDCTC). [4Fe-4S] cluster is bound by residues C285, C288, C296, and C299. 2 short sequence motifs (cx2C motif) span residues 285-288 (CGSC) and 296-299 (CSSC). The tract at residues 285–299 (CGSCYLGDAFRCSSC) is fe-S binding site B.

This sequence belongs to the anamorsin family. As to quaternary structure, monomer. Interacts with TAH18. Interacts with MIA40. The cofactor is [2Fe-2S] cluster. It depends on [4Fe-4S] cluster as a cofactor.

The protein resides in the cytoplasm. It is found in the mitochondrion intermembrane space. Its function is as follows. Component of the cytosolic iron-sulfur (Fe-S) protein assembly (CIA) machinery required for the maturation of extramitochondrial Fe-S proteins. Part of an electron transfer chain functioning in an early step of cytosolic Fe-S biogenesis, facilitating the de novo assembly of a [4Fe-4S] cluster on the scaffold complex CFD1-NBP35. Electrons are transferred to DRE2 from NADPH via the FAD- and FMN-containing protein TAH18. TAH18-DRE2 are also required for the assembly of the diferric tyrosyl radical cofactor of ribonucleotide reductase (RNR), probably by providing electrons for reduction during radical cofactor maturation in the catalytic small subunit RNR2. In Cryptococcus neoformans var. neoformans serotype D (strain B-3501A) (Filobasidiella neoformans), this protein is Fe-S cluster assembly protein DRE2.